The sequence spans 385 residues: UPF0284 protein PMT9312_0438 (385 aa).

Belongs to the UPF0284 family.

The sequence is that of UPF0284 protein PMT9312_0438 from Prochlorococcus marinus (strain MIT 9312).